Here is a 403-residue protein sequence, read N- to C-terminus: MQMPKTLRIRNGEKVKSTFSAQEYANRHAKLRAHLAAENIDAAVFTSYHNINYYSDFLYCSFGRPYALVVTQDDVISISANIDGGQPWRRTVGTDNIVYTDWQRDNYFVAIQQALPRARRIGIEHDHLNLQNRDKLAARYPDAELVDVAAACMRMRMIKSAEEHEMIRHGARVADIGGAAIVEALRDQVPEYEVALHATQAMVRAIAETFDNVELMDTWTWFQSGINTDGAHNPVTTRKVNKGDILSLNCFPMIAGYYTALERTLFLDHCSDDHLRMWQANVEVHEAGLKLIKPGMRCSDIAKELNEIFLKHDLLQYRTFGYGHSFGTLSHYYGREAGLELREDIDTVLEPGMVVSMEPMIMLPEGRPGAGGYREHDILIVNENGAENITKFPYGPERNIIRK.

The active site involves H232.

This sequence belongs to the peptidase M24 family. Creatinase subfamily. In terms of assembly, homodimer.

The enzyme catalyses creatine + H2O = sarcosine + urea. This is Creatinase from Flavobacterium sp. (strain U-188).